A 220-amino-acid polypeptide reads, in one-letter code: Response regulator ArlR (220 aa).

The Response regulatory domain maps to 3–116; it reads KILIVEDEQN…ELLARIRAML (114 aa). Asp52 is modified (4-aspartylphosphate). Positions 122-220 form a DNA-binding region, ompR/PhoB-type; the sequence is KNLIDIKGII…VRGVGYVVRQ (99 aa).

In terms of processing, phosphorylated by ArlS.

It is found in the cytoplasm. Member of the two-component regulatory system ArlS/ArlR. The polypeptide is Response regulator ArlR (arlR) (Staphylococcus saprophyticus subsp. saprophyticus (strain ATCC 15305 / DSM 20229 / NCIMB 8711 / NCTC 7292 / S-41)).